The chain runs to 1812 residues: Putative surface cell antigen sca2 (1812 aa).

Positions 1 to 17 are cleaved as a signal peptide; sequence MSTCLLTSSFLSTSARA. 2 stretches are compositionally biased toward polar residues: residues 344-357 and 371-382; these read FLNNNDTTKPSTGR and MSNQSIHNTGTS. Disordered regions lie at residues 344-382, 648-691, and 1338-1462; these read FLNNNDTTKPSTGRSQKKSGSKNDHWYMSNQSIHNTGTS, LEQT…QGFS, and KQEN…KKDV. Residues 656 to 685 show a composition bias toward pro residues; sequence PNPPPLPLNGGIPNPPPLPLNGSMPPPPPL. Basic and acidic residues-rich tracts occupy residues 1349-1367 and 1382-1393; these read STKDDTQPEDSNKKSEQSD and SKNDKSSDDKKS. Positions 1401 to 1416 are enriched in acidic residues; it reads DEDDTGYATDEEELEE. Over residues 1417–1455 the composition is skewed to low complexity; that stretch reads SNSTTNEELEESNSTTNEELEESNSTTNEELEESNSTTN. The Autotransporter domain maps to 1533-1812; sequence ETSINRGVWI…QGLIKLKVNL (280 aa).

Its subcellular location is the cell outer membrane. The protein is Putative surface cell antigen sca2 (sca2) of Rickettsia sibirica (strain ATCC VR-151 / 246).